Consider the following 218-residue polypeptide: Adenylate kinase (218 aa).

10-15 (GAGKGT) serves as a coordination point for ATP. The interval 30-59 (STGDMLRAAIAKGTPLGLSAQKIMESGGLV) is NMP. Residues Thr31, Arg36, 57 to 59 (GLV), 85 to 88 (GFPR), and Gln92 each bind AMP. The tract at residues 122–159 (GRRIHQPSGRVYHVVNQPPKNPGVDDITGEPLIQRDDD) is LID. ATP-binding positions include Arg123 and 132 to 133 (VY). Arg156 and Arg167 together coordinate AMP. ATP is bound at residue Gly203.

This sequence belongs to the adenylate kinase family. As to quaternary structure, monomer.

It is found in the cytoplasm. It carries out the reaction AMP + ATP = 2 ADP. The protein operates within purine metabolism; AMP biosynthesis via salvage pathway; AMP from ADP: step 1/1. Catalyzes the reversible transfer of the terminal phosphate group between ATP and AMP. Plays an important role in cellular energy homeostasis and in adenine nucleotide metabolism. The chain is Adenylate kinase from Legionella pneumophila (strain Lens).